The following is a 484-amino-acid chain: RNA polymerase sigma-54 factor 1 (484 aa).

Positions 355–374 (NLKAVAEAIQMHESTVSRVT) form a DNA-binding region, H-T-H motif. An RPON box motif is present at residues 444–452 (ARRTVAKYR). The interval 464–484 (RRDNMWSTMNSRASGGTGLDK) is disordered. The span at 468-477 (MWSTMNSRAS) shows a compositional bias: polar residues.

The protein belongs to the sigma-54 factor family.

Sigma factors are initiation factors that promote the attachment of RNA polymerase to specific initiation sites and are then released. This sigma factor is responsible for the expression of the nitrogen fixation genes. The polypeptide is RNA polymerase sigma-54 factor 1 (rpoN1) (Bradyrhizobium diazoefficiens (strain JCM 10833 / BCRC 13528 / IAM 13628 / NBRC 14792 / USDA 110)).